We begin with the raw amino-acid sequence, 502 residues long: Nostrin (502 aa).

The 260-residue stretch at 1-260 (MRDPLTDCSY…AISKVDVEKD (260 aa)) folds into the F-BAR domain. Ser-114 is subject to Phosphoserine. Coiled-coil stretches lie at residues 160–230 (SMTQ…LNQY) and 305–335 (KLWR…SSAS). An REM-1 domain is found at 292–372 (PMDKERRKSL…SYKLSTVLAD (81 aa)). Positions 413–437 (KAESKAPAGEQNNPSSSRPGSSVSQ) are disordered. A compositionally biased stretch (low complexity) spans 423 to 437 (QNNPSSSRPGSSVSQ). In terms of domain architecture, SH3 spans 438-497 (GNNQLCKALYTFQARQDDELNLEKGDIVTIHEKKEEGWWFGSLNGKKGHFPAAYVEELPP). Ser-479 carries the post-translational modification Phosphoserine.

Homotrimer. Interacts with DAB2. Interacts with NOS3, WASL and CAV1. Interacts (via SH3 domain) with DNM2; this interaction allows the recruitment of NOS3 to dynamin-positive structures. As to expression, over-expressed in brain microcapillaries from spontaneously hypertensive rats.

It is found in the cell membrane. The protein resides in the cytoplasmic vesicle. It localises to the cytoplasm. The protein localises to the cytoskeleton. Its subcellular location is the nucleus. Functionally, multivalent adapter protein which may decrease NOS3 activity by inducing its translocation away from the plasma membrane. The polypeptide is Nostrin (Rattus norvegicus (Rat)).